The primary structure comprises 273 residues: Homeobox protein Nkx-2.2 (273 aa).

Disordered regions lie at residues 1 to 56 (MSLT…LDAV) and 91 to 131 (AASA…KRKR). Residues 20-38 (DTNDEDGSVAEGPEEESEG) show a composition bias toward acidic residues. Residues 128–187 (KRKRRVLFSKAQTYELERRFRQQRYLSAPEREHLASLIRLTPTQVKIWFQNHRYKMKRAR) constitute a DNA-binding region (homeobox).

The protein belongs to the NK-2 homeobox family. In terms of assembly, interacts with OLIG2. In terms of tissue distribution, expressed in restricted areas of the developing CNS: the hindbrain and forebrain, and pancreas.

Its subcellular location is the nucleus. Its function is as follows. Transcriptional activator involved in the development of insulin-producting beta cells in the endocrine pancreas. May also be involved in specifying diencephalic neuromeric boundaries, and in controlling the expression of genes that play a role in axonal guidance. Binds to elements within the NEUROD1 promoter. This Mus musculus (Mouse) protein is Homeobox protein Nkx-2.2 (Nkx2-2).